The sequence spans 287 residues: UBX domain-containing protein 1 (287 aa).

The 42-residue stretch at 1 to 42 folds into the UBA domain; the sequence is MAECSTLESLIEMGFSPSRAEKALAATGNQGIEPAMDWLVEH. The interval 44-207 is disordered; sequence DDPDIDEPSV…VQEPPTKKEY (164 aa). 2 stretches are compositionally biased toward basic and acidic residues: residues 72–114 and 129–169; these read CEER…EQEK and KIQE…ERAR. Residues 72 to 164 are a coiled coil; sequence CEERLPLTEE…RVREKIARDK (93 aa). Positions 176–197 are enriched in low complexity; the sequence is SEPISPPAEASIPATTPSPSSP. The region spanning 205-284 is the UBX domain; it reads KEYDQCRIQV…GLVPSAVLIV (80 aa).

The protein localises to the cytoplasm. Functionally, component of a complex required to couple deglycosylation and proteasome-mediated degradation of misfolded proteins in the endoplasmic reticulum that are retrotranslocated in the cytosol. Involved in ubiquitin-proteasome systems. The protein is UBX domain-containing protein 1 (ubxn1) of Xenopus tropicalis (Western clawed frog).